Here is a 203-residue protein sequence, read N- to C-terminus: Guanylate kinase (203 aa).

The region spanning 3-181 (GTLYIVSAPS…ALDDLKAIFR (179 aa)) is the Guanylate kinase-like domain. Position 10 to 17 (10 to 17 (APSGAGKT)) interacts with ATP.

This sequence belongs to the guanylate kinase family.

Its subcellular location is the cytoplasm. It catalyses the reaction GMP + ATP = GDP + ADP. Its function is as follows. Essential for recycling GMP and indirectly, cGMP. This chain is Guanylate kinase (gmk), found in Pseudomonas aeruginosa (strain ATCC 15692 / DSM 22644 / CIP 104116 / JCM 14847 / LMG 12228 / 1C / PRS 101 / PAO1).